Consider the following 436-residue polypeptide: Glutamate-1-semialdehyde 2,1-aminomutase (436 aa).

Lysine 272 carries the post-translational modification N6-(pyridoxal phosphate)lysine.

The protein belongs to the class-III pyridoxal-phosphate-dependent aminotransferase family. HemL subfamily. Homodimer. Requires pyridoxal 5'-phosphate as cofactor.

Its subcellular location is the cytoplasm. The catalysed reaction is (S)-4-amino-5-oxopentanoate = 5-aminolevulinate. The protein operates within porphyrin-containing compound metabolism; protoporphyrin-IX biosynthesis; 5-aminolevulinate from L-glutamyl-tRNA(Glu): step 2/2. It functions in the pathway porphyrin-containing compound metabolism; chlorophyll biosynthesis. The protein is Glutamate-1-semialdehyde 2,1-aminomutase of Methylibium petroleiphilum (strain ATCC BAA-1232 / LMG 22953 / PM1).